The chain runs to 373 residues: Indole glucosinolate O-methyltransferase 3 (373 aa).

The S-adenosyl-L-homocysteine site is built by G217, D240, D260, M261, and K274. The active-site Proton acceptor is H278.

Belongs to the class I-like SAM-binding methyltransferase superfamily. Cation-independent O-methyltransferase family.

It participates in secondary metabolite biosynthesis. Its function is as follows. Involved in indole glucosinolate biosynthesis. Catalyzes methoxylation reactions of the glucosinolate indole ring. Converts the hydroxy intermediates 4-hydroxy-indol-3-yl-methylglucosinolate (4OH-I3M) and 1-hydroxy-indol-3-yl-methylglucosinolate (1OH-I3M) to 4-methoxy-indol-3-yl-methylglucosinolate (4MO-I3M) and 1-methoxy-indol-3-yl-methylglucosinolate(1MO-I3M), respectively. This is Indole glucosinolate O-methyltransferase 3 from Arabidopsis thaliana (Mouse-ear cress).